Consider the following 237-residue polypeptide: Class B acid phosphatase (237 aa).

The first 23 residues, 1–23 (MKKITLALSAVCLLFTLNHSANA), serve as a signal peptide directing secretion. Residue Asp-69 is the Nucleophile of the active site. Residues Asp-69 and Asp-71 each coordinate Mg(2+). Asp-71 acts as the Proton donor in catalysis. Substrate contacts are provided by residues 137–138 (TG) and Lys-177. Residue Asp-192 coordinates Mg(2+).

Belongs to the class B bacterial acid phosphatase family. In terms of assembly, homotetramer. The cofactor is Mg(2+).

It localises to the periplasm. The enzyme catalyses a phosphate monoester + H2O = an alcohol + phosphate. With respect to regulation, nucleosides, and particularly 2'-deoxyribonucleosides, are potent inhibitors of the phosphatase activity. The phosphatase activity is also inhibited by inorganic phosphate and EDTA in vitro. Functionally, dephosphorylates several organic phosphate monoesters such as 3'-UMP, 5'-UMP and pNPP. Also has a phosphotransferase activity catalyzing the transfer of low-energy phosphate groups from organic phosphate monoesters to free hydroxyl groups of various organic compounds such as the 2'-, 3-, or 5'-hydroxyls of nucleosides and nucleotides. Also displays significant phosphomutase activity since it is able to catalyze the transfer of the phosphate group of 3'-AMP from the 3'-position both to the 2'- and 5'-positions. One of the physiological functions of the phosphohydrolytic activity of the enzyme is believed to be the scavenging of organic phosphate esters that otherwise cannot pass the cytoplasmic membrane. This chain is Class B acid phosphatase (aphA), found in Salmonella typhimurium (strain LT2 / SGSC1412 / ATCC 700720).